The primary structure comprises 117 residues: Large ribosomal subunit protein bL17 (117 aa).

This sequence belongs to the bacterial ribosomal protein bL17 family. As to quaternary structure, part of the 50S ribosomal subunit. Contacts protein L32.

The sequence is that of Large ribosomal subunit protein bL17 from Campylobacter jejuni subsp. doylei (strain ATCC BAA-1458 / RM4099 / 269.97).